The chain runs to 41 residues: Large ribosomal subunit protein bL36 (41 aa).

It belongs to the bacterial ribosomal protein bL36 family.

The polypeptide is Large ribosomal subunit protein bL36 (Nitrobacter winogradskyi (strain ATCC 25391 / DSM 10237 / CIP 104748 / NCIMB 11846 / Nb-255)).